A 164-amino-acid chain; its full sequence is Peptidyl-prolyl cis-trans isomerase A-like 4H (164 aa).

The PPIase cyclophilin-type domain occupies 7–163; the sequence is FFDITVDGKP…KKITIADCGQ (157 aa). N-linked (GlcNAc...) asparagine glycosylation is found at Asn-71 and Asn-108.

This sequence belongs to the cyclophilin-type PPIase family. PPIase A subfamily.

The protein resides in the cytoplasm. The catalysed reaction is [protein]-peptidylproline (omega=180) = [protein]-peptidylproline (omega=0). PPIases accelerate the folding of proteins. It catalyzes the cis-trans isomerization of proline imidic peptide bonds in oligopeptides. The polypeptide is Peptidyl-prolyl cis-trans isomerase A-like 4H (Homo sapiens (Human)).